The sequence spans 736 residues: 1,4-alpha-glucan branching enzyme GlgB (736 aa).

The active-site Nucleophile is aspartate 415. Catalysis depends on glutamate 470, which acts as the Proton donor.

It belongs to the glycosyl hydrolase 13 family. GlgB subfamily. Monomer.

The catalysed reaction is Transfers a segment of a (1-&gt;4)-alpha-D-glucan chain to a primary hydroxy group in a similar glucan chain.. The protein operates within glycan biosynthesis; glycogen biosynthesis. Its function is as follows. Catalyzes the formation of the alpha-1,6-glucosidic linkages in glycogen by scission of a 1,4-alpha-linked oligosaccharide from growing alpha-1,4-glucan chains and the subsequent attachment of the oligosaccharide to the alpha-1,6 position. The chain is 1,4-alpha-glucan branching enzyme GlgB from Burkholderia orbicola (strain AU 1054).